Reading from the N-terminus, the 228-residue chain is UPF0173 metal-dependent hydrolase ABC2731 (228 aa).

The protein belongs to the UPF0173 family.

The polypeptide is UPF0173 metal-dependent hydrolase ABC2731 (Shouchella clausii (strain KSM-K16) (Alkalihalobacillus clausii)).